The primary structure comprises 227 residues: Cytidylate kinase (227 aa).

12–20 is an ATP binding site; the sequence is GPSGAGKGT.

Belongs to the cytidylate kinase family. Type 1 subfamily.

Its subcellular location is the cytoplasm. The enzyme catalyses CMP + ATP = CDP + ADP. It carries out the reaction dCMP + ATP = dCDP + ADP. The protein is Cytidylate kinase of Xanthomonas axonopodis pv. citri (strain 306).